The chain runs to 142 residues: Nucleoside diphosphate kinase (142 aa).

The ATP site is built by K11, F59, R87, T93, R104, and N114. The active-site Pros-phosphohistidine intermediate is the H117.

This sequence belongs to the NDK family. In terms of assembly, homotetramer. The cofactor is Mg(2+).

The protein localises to the cytoplasm. The enzyme catalyses a 2'-deoxyribonucleoside 5'-diphosphate + ATP = a 2'-deoxyribonucleoside 5'-triphosphate + ADP. It catalyses the reaction a ribonucleoside 5'-diphosphate + ATP = a ribonucleoside 5'-triphosphate + ADP. Functionally, major role in the synthesis of nucleoside triphosphates other than ATP. The ATP gamma phosphate is transferred to the NDP beta phosphate via a ping-pong mechanism, using a phosphorylated active-site intermediate. This Pectobacterium carotovorum subsp. carotovorum (strain PC1) protein is Nucleoside diphosphate kinase.